Reading from the N-terminus, the 124-residue chain is Small ribosomal subunit protein uS12 (124 aa).

The residue at position 89 (D89) is a 3-methylthioaspartic acid.

Belongs to the universal ribosomal protein uS12 family. In terms of assembly, part of the 30S ribosomal subunit. Contacts proteins S8 and S17. May interact with IF1 in the 30S initiation complex.

Functionally, with S4 and S5 plays an important role in translational accuracy. Interacts with and stabilizes bases of the 16S rRNA that are involved in tRNA selection in the A site and with the mRNA backbone. Located at the interface of the 30S and 50S subunits, it traverses the body of the 30S subunit contacting proteins on the other side and probably holding the rRNA structure together. The combined cluster of proteins S8, S12 and S17 appears to hold together the shoulder and platform of the 30S subunit. This chain is Small ribosomal subunit protein uS12, found in Arthrobacter sp. (strain FB24).